Reading from the N-terminus, the 229-residue chain is Putative N-acetylmannosamine-6-phosphate 2-epimerase (229 aa).

This sequence belongs to the NanE family.

It catalyses the reaction an N-acyl-D-glucosamine 6-phosphate = an N-acyl-D-mannosamine 6-phosphate. It functions in the pathway amino-sugar metabolism; N-acetylneuraminate degradation; D-fructose 6-phosphate from N-acetylneuraminate: step 3/5. Converts N-acetylmannosamine-6-phosphate (ManNAc-6-P) to N-acetylglucosamine-6-phosphate (GlcNAc-6-P). The sequence is that of Putative N-acetylmannosamine-6-phosphate 2-epimerase from Cutibacterium acnes (strain DSM 16379 / KPA171202) (Propionibacterium acnes).